The following is a 508-amino-acid chain: Light-independent protochlorophyllide reductase subunit B (508 aa).

[4Fe-4S] cluster is bound at residue Asp-36. Asp-294 (proton donor) is an active-site residue. A substrate-binding site is contributed by 429–430 (GM).

It belongs to the ChlB/BchB/BchZ family. Protochlorophyllide reductase is composed of three subunits; ChlL, ChlN and ChlB. Forms a heterotetramer of two ChlB and two ChlN subunits. The cofactor is [4Fe-4S] cluster.

It carries out the reaction chlorophyllide a + oxidized 2[4Fe-4S]-[ferredoxin] + 2 ADP + 2 phosphate = protochlorophyllide a + reduced 2[4Fe-4S]-[ferredoxin] + 2 ATP + 2 H2O. Its pathway is porphyrin-containing compound metabolism; chlorophyll biosynthesis (light-independent). Its function is as follows. Component of the dark-operative protochlorophyllide reductase (DPOR) that uses Mg-ATP and reduced ferredoxin to reduce ring D of protochlorophyllide (Pchlide) to form chlorophyllide a (Chlide). This reaction is light-independent. The NB-protein (ChlN-ChlB) is the catalytic component of the complex. This Nostoc punctiforme (strain ATCC 29133 / PCC 73102) protein is Light-independent protochlorophyllide reductase subunit B.